Consider the following 325-residue polypeptide: Transcription initiation factor IIB (325 aa).

Residues 19 to 52 (NKLWCMVCRIQDPDIIEDYAKGDLICRGCGVVVG) form a TFIIB-type zinc finger. Zn(2+) contacts are provided by Cys-23, Cys-26, Cys-44, and Cys-47. 2 consecutive repeat copies span residues 131–207 (MADH…IMKE) and 227–303 (FCST…DLYA).

It belongs to the TFIIB family.

Its subcellular location is the nucleus. In terms of biological role, general transcription factor that plays a role in transcription initiation by RNA polymerase II (Pol II). Involved in the pre-initiation complex (PIC) formation and Pol II recruitment at promoter DNA. This chain is Transcription initiation factor IIB (gtf2b), found in Dictyostelium discoideum (Social amoeba).